A 563-amino-acid polypeptide reads, in one-letter code: Probable terpene synthase 4 (563 aa).

The Mg(2+) site is built by Asp316, Asp320, and Glu469. The DDXXD motif signature appears at 316–320 (DDIFD).

Belongs to the terpene synthase family. Requires Mg(2+) as cofactor.

Probable sesquiterpene synthase. This chain is Probable terpene synthase 4 (TPS4), found in Ricinus communis (Castor bean).